The sequence spans 344 residues: Photosystem II protein D1 (344 aa).

Position 2 is an N-acetylthreonine (Thr-2). Thr-2 carries the post-translational modification Phosphothreonine. Transmembrane regions (helical) follow at residues 29–46 (YIGWFGVLMFPLLLTATS), 118–133 (HFLLGVACYMGREWEL), and 142–156 (WIAVAYSAPVAAATA). His-118 provides a ligand contact to chlorophyll a. Tyr-126 provides a ligand contact to pheophytin a. [CaMn4O5] cluster contacts are provided by Asp-170 and Glu-189. Residues 197–218 (FHMLGVAGVFGGSLFSAMHGSL) traverse the membrane as a helical segment. His-198 serves as a coordination point for chlorophyll a. A quinone contacts are provided by residues His-215 and 264–265 (SF). His-215 serves as a coordination point for Fe cation. His-272 is a binding site for Fe cation. A helical transmembrane segment spans residues 274–288 (FLAAWPVVCIWFTAL). Residues His-332, Glu-333, Asp-342, and Ala-344 each coordinate [CaMn4O5] cluster.

Belongs to the reaction center PufL/M/PsbA/D family. PSII is composed of 1 copy each of membrane proteins PsbA, PsbB, PsbC, PsbD, PsbE, PsbF, PsbH, PsbI, PsbJ, PsbK, PsbL, PsbM, PsbT, PsbX, PsbY, PsbZ, Psb30/Ycf12, at least 3 peripheral proteins of the oxygen-evolving complex and a large number of cofactors. It forms dimeric complexes. The D1/D2 heterodimer binds P680, chlorophylls that are the primary electron donor of PSII, and subsequent electron acceptors. It shares a non-heme iron and each subunit binds pheophytin, quinone, additional chlorophylls, carotenoids and lipids. D1 provides most of the ligands for the Mn4-Ca-O5 cluster of the oxygen-evolving complex (OEC). There is also a Cl(-1) ion associated with D1 and D2, which is required for oxygen evolution. The PSII complex binds additional chlorophylls, carotenoids and specific lipids. is required as a cofactor. Tyr-161 forms a radical intermediate that is referred to as redox-active TyrZ, YZ or Y-Z.

It is found in the plastid. The protein resides in the chloroplast thylakoid membrane. The catalysed reaction is 2 a plastoquinone + 4 hnu + 2 H2O = 2 a plastoquinol + O2. In terms of biological role, photosystem II (PSII) is a light-driven water:plastoquinone oxidoreductase that uses light energy to abstract electrons from H(2)O, generating O(2) and a proton gradient subsequently used for ATP formation. It consists of a core antenna complex that captures photons, and an electron transfer chain that converts photonic excitation into a charge separation. The D1/D2 (PsbA/PsbD) reaction center heterodimer binds P680, the primary electron donor of PSII as well as several subsequent electron acceptors. This Staurastrum punctulatum (Green alga) protein is Photosystem II protein D1.